Here is a 234-residue protein sequence, read N- to C-terminus: Glutathione S-transferase U16 (234 aa).

Positions 5-85 (EEVKLLGVWY…YIDETWNSSA (81 aa)) constitute a GST N-terminal domain. Glutathione is bound by residues 15 to 16 (SP), 42 to 43 (SK), 56 to 57 (KV), and 69 to 70 (ES). The region spanning 92-219 (HPYDRALARF…APEIEKVAEF (128 aa)) is the GST C-terminal domain.

It belongs to the GST superfamily. Tau family.

Its subcellular location is the cytoplasm. The protein localises to the cytosol. The catalysed reaction is RX + glutathione = an S-substituted glutathione + a halide anion + H(+). Its function is as follows. May be involved in the conjugation of reduced glutathione to a wide number of exogenous and endogenous hydrophobic electrophiles and have a detoxification role against certain herbicides. The sequence is that of Glutathione S-transferase U16 (GSTU16) from Arabidopsis thaliana (Mouse-ear cress).